Reading from the N-terminus, the 191-residue chain is Thymidine kinase (191 aa).

Residues 9–16 (GSMNSGKT) and 85–88 (DESQ) each bind ATP. Catalysis depends on Glu86, which acts as the Proton acceptor. Cys143, Cys146, Cys181, and Cys184 together coordinate Zn(2+).

The protein belongs to the thymidine kinase family. As to quaternary structure, homotetramer.

The protein localises to the cytoplasm. It carries out the reaction thymidine + ATP = dTMP + ADP + H(+). The sequence is that of Thymidine kinase from Listeria monocytogenes serovar 1/2a (strain ATCC BAA-679 / EGD-e).